A 333-amino-acid polypeptide reads, in one-letter code: Probable 4-hydroxyproline 2-epimerase (333 aa).

The active-site Proton acceptor is the Cys-90. Substrate is bound by residues 91 to 92 (GH), His-223, and Asp-249. The Proton donor role is filled by Cys-253. 254 to 255 (GT) contacts substrate.

This sequence belongs to the proline racemase family.

The enzyme catalyses trans-4-hydroxy-L-proline = cis-4-hydroxy-D-proline. Likely catalyzes the epimerization of trans-4-hydroxy-L-proline (t4LHyp) to cis-4-hydroxy-D-proline (c4DHyp). May be involved in the degradation pathway that converts t4LHyp to alpha-ketoglutarate, which would allow R.meliloti to grow on t4LHyp as a sole carbon source. The protein is Probable 4-hydroxyproline 2-epimerase of Rhizobium meliloti (strain 1021) (Ensifer meliloti).